We begin with the raw amino-acid sequence, 347 residues long: MLFDYINALLKKPTLRTPIWVMRQAGRYLPEYRETRIKAGDFLTLCKSPELACEVTMQPIDRFDLDAAILFSDILTIPDAMGLGLYFLEGEGPKFSNPLNTLSSIEQLKKPNVGNELSYVTDAVSVIKKALNNKVPLIGFTGSPWTLATYMVEGGSSKNFVKVKGLMYENPVYMHQLLDKLSDIIIDYLNGQIQVGVDSVMIFDTWGGLLNKQSYEDFSLQYMTKIVNGIKRKFNGKTIPITLFTKGGAMWLEQIANSGCDGVALDWTVELNDAQQRIGAKVALQGNLDPCVLYASPEKIREEVKKILSQFQGDTGHVFNLGHGISPDVNPEHMKVLVDVVHEFSKR.

Substrate is bound by residues 23–27 (RQAGR), aspartate 73, tyrosine 150, threonine 205, and histidine 323.

It belongs to the uroporphyrinogen decarboxylase family. In terms of assembly, homodimer.

It localises to the cytoplasm. It catalyses the reaction uroporphyrinogen III + 4 H(+) = coproporphyrinogen III + 4 CO2. The protein operates within porphyrin-containing compound metabolism; protoporphyrin-IX biosynthesis; coproporphyrinogen-III from 5-aminolevulinate: step 4/4. Functionally, catalyzes the decarboxylation of four acetate groups of uroporphyrinogen-III to yield coproporphyrinogen-III. This is Uroporphyrinogen decarboxylase from Ruthia magnifica subsp. Calyptogena magnifica.